The sequence spans 217 residues: Ras-related protein RABA5b (217 aa).

19–26 (GDSAVGKS) provides a ligand contact to GTP. Positions 41–49 (SKATIGVEF) match the Effector region motif. Residues 67 to 71 (DTAGQ), 125 to 128 (NKCD), and 155 to 156 (SA) each bind GTP. Residues Cys-214 and Cys-215 are each lipidated (S-geranylgeranyl cysteine).

This sequence belongs to the small GTPase superfamily. Rab family.

The protein localises to the cell membrane. In terms of biological role, intracellular vesicle trafficking and protein transport. The sequence is that of Ras-related protein RABA5b (RABA5B) from Arabidopsis thaliana (Mouse-ear cress).